Here is a 129-residue protein sequence, read N- to C-terminus: Ig lambda-1 chain V regions MOPC 104E/RPC20/J558/S104 (129 aa).

The signal sequence occupies residues 1–19 (MAWISLILSLLALSSGAIS). Gln20 carries the pyrrolidone carboxylic acid modification. Residues 20-125 (QAVVTQESAL…HWVFGGGTKL (106 aa)) enclose the Ig-like domain.

This chain is Ig lambda-1 chain V regions MOPC 104E/RPC20/J558/S104, found in Mus musculus (Mouse).